The following is a 96-amino-acid chain: SAGA complex subunit SUS1 (96 aa).

A Glycyl lysine isopeptide (Lys-Gly) (interchain with G-Cter in ubiquitin) cross-link involves residue K68.

Belongs to the ENY2 family. As to quaternary structure, component of the 1.8 MDa SAGA (Spt-Ada-Gcn5 acetyltransferase) complex, which is composed of 19 subunits TRA1, SPT7, TAF5, NGG1/ADA3, SGF73, SPT20/ADA5, SPT8, TAF12, TAF6, HFI1/ADA1, UBP8, GCN5, ADA2, SPT3, SGF29, TAF10, TAF9, SGF11 and SUS1. The SAGA complex is composed of 4 modules, namely the HAT (histone acetyltransferase) module (GCN5, ADA2, NGG1/ADA3 and SGF29), the DUB (deubiquitinating) module (UBP8, SGF11, SGF73 and SUS1), the core or TAF (TBP-associated factor) module (TAF5, TAF6, TAF9, TAF10 and TAF12), and the Tra1 or SPT (Suppressor of Ty) module (TRA1, HFI1/ADA1, SPT3, SPT7, SPT8 and SPT20/ADA5). The Tra1/SPT module binds activators, the core module recruits TBP (TATA-binding protein), the HAT module contains the histone H3 acetyltransferase GCN5, and the DUB module comprises the histone H2B deubiquitinase UBP8. Also identified in an altered form of SAGA, named SALSA (SAGA altered, Spt8 absent) or SLIK (SAGA-like) complex, which contains a C-terminal truncated form of SPT7 and is missing SPT8. However, it has been shown that the SAGA and SAGA-like SALSA/SLIK transcriptional coactivators are structurally and biochemically equivalent. Component of the nuclear pore complex (NPC)-associated TREX-2 complex (transcription and export complex 2), composed of at least SUS1, SAC3, THP1, SEM1, and CDC31. TREX-2 contains 2 SUS1 chains. The TREX-2 complex interacts with the mRNA export factors MEX67, MTR2 and SUB2, and the nucleoporin NUP1. Interacts directly with THP1, SAC3. Interacts directly with SGF11 and UBP8. Interacts with YRA1, MEX67 and with the RNA polymerase II.

It is found in the nucleus. It localises to the nucleoplasm. The protein resides in the cytoplasm. The protein localises to the P-body. Its function is as follows. Involved in mRNA export coupled transcription activation by association with both the TREX-2 and the SAGA complexes. SAGA acts as a general cofactor required for essentially all RNA polymerase II transcription. At the promoters, SAGA is required for transcription pre-initiation complex (PIC) recruitment. It influences RNA polymerase II transcriptional activity through different activities such as TBP interaction (via core/TAF module) and promoter selectivity, interaction with transcription activators (via Tra1/SPT module), and chromatin modification through histone acetylation (via HAT module) and deubiquitination (via DUB module). SAGA preferentially acetylates histones H3 (to form H3K9ac, H3K14ac, H3K18ac and H3K23ac) and H2B and deubiquitinates histone H2B. SAGA interacts with DNA via upstream activating sequences (UASs). Also identified in a modified version of SAGA named SALSA or SLIK. The cleavage of SPT7 and the absence of the SPT8 subunit in SLIK neither drive any major conformational differences in its structure compared with SAGA, nor significantly affect HAT, DUB, or DNA-binding activities. Within the SAGA complex, participates in a subcomplex with SGF11, SGF73 and UBP8 required for deubiquitination of H2B and for the maintenance of steady-state H3 methylation levels. The TREX-2 complex functions in docking export-competent ribonucleoprotein particles (mRNPs) to the nuclear entrance of the nuclear pore complex (nuclear basket), by association with components of the nuclear mRNA export machinery (MEX67-MTR2 and SUB2) in the nucleoplasm and the nucleoporin NUP1 at the nuclear basket. TREX-2 participates in mRNA export and accurate chromatin positioning in the nucleus by tethering genes to the nuclear periphery. SUS1 also has a role in mRNP biogenesis and maintenance of genome integrity through preventing RNA-mediated genome instability. Has a role in response to DNA damage induced by methyl methane sulfonate (MMS) and replication arrest induced by hydroxyurea. May also be involved in cytoplasmic mRNA decay by interaction with components of P-bodies. The chain is SAGA complex subunit SUS1 from Saccharomyces cerevisiae (strain ATCC 204508 / S288c) (Baker's yeast).